A 336-amino-acid chain; its full sequence is Phosphate acyltransferase (336 aa).

It belongs to the PlsX family. As to quaternary structure, homodimer. Probably interacts with PlsY.

The protein resides in the cytoplasm. It carries out the reaction a fatty acyl-[ACP] + phosphate = an acyl phosphate + holo-[ACP]. It participates in lipid metabolism; phospholipid metabolism. Functionally, catalyzes the reversible formation of acyl-phosphate (acyl-PO(4)) from acyl-[acyl-carrier-protein] (acyl-ACP). This enzyme utilizes acyl-ACP as fatty acyl donor, but not acyl-CoA. This is Phosphate acyltransferase from Pseudomonas putida (strain ATCC 47054 / DSM 6125 / CFBP 8728 / NCIMB 11950 / KT2440).